We begin with the raw amino-acid sequence, 331 residues long: ESX-3 secretion system protein EccE3 (331 aa).

2 helical membrane passes run Gly11–Ser31 and Leu37–Phe57.

The protein belongs to the EccE family. Part of the ESX-3 / type VII secretion system (T7SS), which is composed of cytosolic and membrane components. The ESX-3 membrane complex is composed of EccB3, EccC3, EccD3 and EccE3.

The protein localises to the cell inner membrane. Functionally, part of the ESX-3 specialized secretion system, which is important for iron and zinc uptake or homeostasis. This Mycobacterium tuberculosis (strain ATCC 25618 / H37Rv) protein is ESX-3 secretion system protein EccE3.